Reading from the N-terminus, the 189-residue chain is MAAGTTSDLRNGIVIRYNNDLYQVVEFQHVAPGNWRAFVRMKLKSLTTGKVIEDRVRAGAEIDIVRIERRPMQYLYREGDSFVFMDNDTFDQIPVSAELVGDAVKFMKENETVDLVYDAEKDQIIGVELPIFVNLKVVETTVAVRGDTATNVTKPATLETGAVIEVPAFINEGDVLKIDTRTGEYITRV.

It belongs to the elongation factor P family.

The protein resides in the cytoplasm. The protein operates within protein biosynthesis; polypeptide chain elongation. In terms of biological role, involved in peptide bond synthesis. Stimulates efficient translation and peptide-bond synthesis on native or reconstituted 70S ribosomes in vitro. Probably functions indirectly by altering the affinity of the ribosome for aminoacyl-tRNA, thus increasing their reactivity as acceptors for peptidyl transferase. This Chloroflexus aggregans (strain MD-66 / DSM 9485) protein is Elongation factor P.